Consider the following 666-residue polypeptide: tRNA 5-methylaminomethyl-2-thiouridine biosynthesis bifunctional protein MnmC (666 aa).

The tract at residues 1–253 is tRNA (mnm(5)s(2)U34)-methyltransferase; sequence MSSPFAPIIT…KRHMLCAYYE (253 aa). The FAD-dependent cmnm(5)s(2)U34 oxidoreductase stretch occupies residues 283 to 666; it reads VGGGLAGCFI…FLRKKIIQGP (384 aa).

In the N-terminal section; belongs to the methyltransferase superfamily. tRNA (mnm(5)s(2)U34)-methyltransferase family. This sequence in the C-terminal section; belongs to the DAO family. It depends on FAD as a cofactor.

It localises to the cytoplasm. It catalyses the reaction 5-aminomethyl-2-thiouridine(34) in tRNA + S-adenosyl-L-methionine = 5-methylaminomethyl-2-thiouridine(34) in tRNA + S-adenosyl-L-homocysteine + H(+). Catalyzes the last two steps in the biosynthesis of 5-methylaminomethyl-2-thiouridine (mnm(5)s(2)U) at the wobble position (U34) in tRNA. Catalyzes the FAD-dependent demodification of cmnm(5)s(2)U34 to nm(5)s(2)U34, followed by the transfer of a methyl group from S-adenosyl-L-methionine to nm(5)s(2)U34, to form mnm(5)s(2)U34. In Legionella pneumophila (strain Corby), this protein is tRNA 5-methylaminomethyl-2-thiouridine biosynthesis bifunctional protein MnmC.